We begin with the raw amino-acid sequence, 318 residues long: HTH-type transcriptional regulatory protein TyrR (318 aa).

One can recognise a Sigma-54 factor interaction; truncated domain in the interval 15–239 (FIVQSEAMKS…LYNTLYRACS (225 aa)). ATP contacts are provided by residues 43–50 (GETGSGKD) and 101–110 (ANKGTVLLDG). Residues 292 to 312 (STRKLAQRLGVSHTAIANKLK) constitute a DNA-binding region (H-T-H motif).

Homodimer. In presence of tyrosine (or high concentrations of phenylalanine or tryptophan) and ATP, it self-associates to form a hexamer.

It localises to the cytoplasm. With respect to regulation, the DNA binding ability is drastically reduced in the presence of ATP. Tyrosine further reduces the binding affinity of TyrR in the presence of ATP. Functionally, transcriptional regulator of the TyrR regulon, which includes a number of genes coding for proteins involved in the biosynthesis or transport of the three aromatic amino acids, phenylalanine, tyrosine and tryptophan. These three aromatic amino acids act as effectors which bind to the TyrR protein to form an active regulatory protein. Acts by binding specifically to TyrR boxes in the promoter region of the target genes. Can efficiently repress the transcription of the aroF promoter, but lacks the ability to function as a transcriptional activator. This Haemophilus influenzae (strain ATCC 51907 / DSM 11121 / KW20 / Rd) protein is HTH-type transcriptional regulatory protein TyrR.